Consider the following 59-residue polypeptide: Large ribosomal subunit protein uL30 (59 aa).

This sequence belongs to the universal ribosomal protein uL30 family. Part of the 50S ribosomal subunit.

This Alkaliphilus oremlandii (strain OhILAs) (Clostridium oremlandii (strain OhILAs)) protein is Large ribosomal subunit protein uL30.